The primary structure comprises 339 residues: NADH-quinone oxidoreductase subunit H (339 aa).

8 consecutive transmembrane segments (helical) span residues 7–27 (LFWI…AVAY), 77–97 (VLFV…WAVI), 112–132 (LLYI…AGWA), 149–169 (VVSY…AAGS), 180–200 (AGGI…VYWI), 235–255 (VFFL…AVMF), 276–296 (VPGV…YLWF), and 315–335 (VLIP…VTGF).

The protein belongs to the complex I subunit 1 family. NDH-1 is composed of 14 different subunits. Subunits NuoA, H, J, K, L, M, N constitute the membrane sector of the complex.

The protein localises to the cell inner membrane. The enzyme catalyses a quinone + NADH + 5 H(+)(in) = a quinol + NAD(+) + 4 H(+)(out). NDH-1 shuttles electrons from NADH, via FMN and iron-sulfur (Fe-S) centers, to quinones in the respiratory chain. The immediate electron acceptor for the enzyme in this species is believed to be ubiquinone. Couples the redox reaction to proton translocation (for every two electrons transferred, four hydrogen ions are translocated across the cytoplasmic membrane), and thus conserves the redox energy in a proton gradient. This subunit may bind ubiquinone. In Alkalilimnicola ehrlichii (strain ATCC BAA-1101 / DSM 17681 / MLHE-1), this protein is NADH-quinone oxidoreductase subunit H.